Here is a 237-residue protein sequence, read N- to C-terminus: Ribonuclease PH (237 aa).

Phosphate-binding positions include Arg-86 and 124-126 (GTR).

The protein belongs to the RNase PH family. As to quaternary structure, homohexameric ring arranged as a trimer of dimers.

It carries out the reaction tRNA(n+1) + phosphate = tRNA(n) + a ribonucleoside 5'-diphosphate. Phosphorolytic 3'-5' exoribonuclease that plays an important role in tRNA 3'-end maturation. Removes nucleotide residues following the 3'-CCA terminus of tRNAs; can also add nucleotides to the ends of RNA molecules by using nucleoside diphosphates as substrates, but this may not be physiologically important. Probably plays a role in initiation of 16S rRNA degradation (leading to ribosome degradation) during starvation. This Shewanella denitrificans (strain OS217 / ATCC BAA-1090 / DSM 15013) protein is Ribonuclease PH.